A 487-amino-acid polypeptide reads, in one-letter code: GTPase Der (487 aa).

2 consecutive EngA-type G domains span residues 3 to 166 and 201 to 374; these read PVIA…IAEL and VKLA…ESAT. GTP-binding positions include 9 to 16, 56 to 60, 118 to 121, 207 to 214, 254 to 258, and 319 to 322; these read GRPNVGKS, DTGGI, NKTD, DTAGV, and NKWD. The KH-like domain maps to 375–459; sequence KRISTAMLRR…PIKIEFREGD (85 aa).

It belongs to the TRAFAC class TrmE-Era-EngA-EngB-Septin-like GTPase superfamily. EngA (Der) GTPase family. Associates with the 50S ribosomal subunit.

GTPase that plays an essential role in the late steps of ribosome biogenesis. This chain is GTPase Der, found in Pseudoalteromonas translucida (strain TAC 125).